The following is a 308-amino-acid chain: Ornithine carbamoyltransferase (308 aa).

Residues 55-58, Gln82, Arg106, and 133-136 each bind carbamoyl phosphate; these read STRT and HPCQ. Residues Asn164, Asp227, and 231–232 contribute to the L-ornithine site; that span reads SM. Residues 267 to 268 and Arg295 each bind carbamoyl phosphate; that span reads CL.

Belongs to the aspartate/ornithine carbamoyltransferase superfamily. OTCase family.

The protein resides in the cytoplasm. It carries out the reaction carbamoyl phosphate + L-ornithine = L-citrulline + phosphate + H(+). It participates in amino-acid biosynthesis; L-arginine biosynthesis; L-arginine from L-ornithine and carbamoyl phosphate: step 1/3. In terms of biological role, reversibly catalyzes the transfer of the carbamoyl group from carbamoyl phosphate (CP) to the N(epsilon) atom of ornithine (ORN) to produce L-citrulline. This is Ornithine carbamoyltransferase from Prochlorococcus marinus subsp. pastoris (strain CCMP1986 / NIES-2087 / MED4).